The sequence spans 87 residues: Small ribosomal subunit protein uS17 (87 aa).

This sequence belongs to the universal ribosomal protein uS17 family. As to quaternary structure, part of the 30S ribosomal subunit.

Functionally, one of the primary rRNA binding proteins, it binds specifically to the 5'-end of 16S ribosomal RNA. The polypeptide is Small ribosomal subunit protein uS17 (Pelotomaculum thermopropionicum (strain DSM 13744 / JCM 10971 / SI)).